Here is a 505-residue protein sequence, read N- to C-terminus: Glutamyl-tRNA(Gln) amidotransferase subunit A (505 aa).

Residues K80 and S155 each act as charge relay system in the active site. Catalysis depends on S179, which acts as the Acyl-ester intermediate.

It belongs to the amidase family. GatA subfamily. As to quaternary structure, heterotrimer of A, B and C subunits.

It catalyses the reaction L-glutamyl-tRNA(Gln) + L-glutamine + ATP + H2O = L-glutaminyl-tRNA(Gln) + L-glutamate + ADP + phosphate + H(+). Functionally, allows the formation of correctly charged Gln-tRNA(Gln) through the transamidation of misacylated Glu-tRNA(Gln) in organisms which lack glutaminyl-tRNA synthetase. The reaction takes place in the presence of glutamine and ATP through an activated gamma-phospho-Glu-tRNA(Gln). In Acidothermus cellulolyticus (strain ATCC 43068 / DSM 8971 / 11B), this protein is Glutamyl-tRNA(Gln) amidotransferase subunit A.